The chain runs to 1755 residues: Transposon Ty1-NL1 Gag-Pol polyprotein (1755 aa).

Composition is skewed to polar residues over residues 1-23 (MESQQLSQHSPISHGSACASVTS), 48-60 (TKANSQQTTTPAS), 71-86 (SPQTAQSHSPQNGPYQ), and 131-152 (PQYPSSVGTPLSTPSPESGNTF). 3 disordered regions span residues 1–86 (MESQ…GPYQ), 131–171 (PQYP…YVRP), and 350–420 (QQES…IRGS). A compositionally biased stretch (low complexity) spans 153–165 (TDSSSADSDMTST). Residues 299 to 401 (NNGIPINNKV…NSQSRTARAH (103 aa)) are RNA-binding. Over residues 363-372 (NPSDEKKDSR) the composition is skewed to basic and acidic residues. Over residues 373-412 (TYTNTTKPKSITRNSQKPNNSQSRTARAHNVSTSNNSSGP) the composition is skewed to polar residues. The For protease activity; shared with dimeric partner role is filled by D461. Residues 583–640 (NVHTSESTRKYPYPFIHRMLAHANAQTIRYSLKNNTITYFNESDVDWSSAIDYQCPDC) form an integrase-type zinc finger-like region. The 176-residue stretch at 660-835 (NSYEPFQYLH…AGLDISTLLP (176 aa)) folds into the Integrase catalytic domain. Residues D671 and D736 each coordinate Mg(2+). Disordered stretches follow at residues 956–1120 (SKAV…TCPK) and 1146–1172 (DSFKELPPINSRQTNSSLGGIGDSNAY). A compositionally biased stretch (low complexity) spans 960-969 (SPTDSTPPST). The span at 1005–1015 (STPQISDIEST) shows a compositional bias: polar residues. Over residues 1038 to 1053 (ESSHTSKSKDFRHSDS) the composition is skewed to basic and acidic residues. Polar residues-rich tracts occupy residues 1054-1082 (YSDNETNHTNVPISSTGGTNNKTVPQTSE) and 1095-1106 (SIDTSSSESNSL). The short motif at 1178–1212 (KKRSLEDNETEIKVSRDTWNTKNMRSLEPPRSKKR) is the Bipartite nuclear localization signal element. Residues 1338 to 1476 (NNYYITQLDI…DILGLEIKYQ (139 aa)) enclose the Reverse transcriptase Ty1/copia-type domain. Mg(2+) contacts are provided by D1346, D1427, D1428, D1610, E1652, and D1685. One can recognise an RNase H Ty1/copia-type domain in the interval 1610 to 1752 (DASYGNQPYY…IKTFKLLTNK (143 aa)).

As to quaternary structure, the capsid protein forms a homotrimer, from which the VLPs are assembled. The protease is a homodimer, whose active site consists of two apposed aspartic acid residues. Initially, virus-like particles (VLPs) are composed of the structural unprocessed proteins Gag and Gag-Pol, and also contain the host initiator methionine tRNA (tRNA(i)-Met) which serves as a primer for minus-strand DNA synthesis, and a dimer of genomic Ty RNA. Processing of the polyproteins occurs within the particle and proceeds by an ordered pathway, called maturation. First, the protease (PR) is released by autocatalytic cleavage of the Gag-Pol polyprotein yielding capsid protein p45 and a Pol-p154 precursor protein. This cleavage is a prerequisite for subsequent processing of Pol-p154 at the remaining sites to release the mature structural and catalytic proteins. Maturation takes place prior to the RT reaction and is required to produce transposition-competent VLPs.

Its subcellular location is the cytoplasm. The protein localises to the nucleus. It carries out the reaction DNA(n) + a 2'-deoxyribonucleoside 5'-triphosphate = DNA(n+1) + diphosphate. The catalysed reaction is Endonucleolytic cleavage to 5'-phosphomonoester.. Capsid protein (CA) is the structural component of the virus-like particle (VLP), forming the shell that encapsulates the retrotransposons dimeric RNA genome. The particles are assembled from trimer-clustered units and there are holes in the capsid shells that allow for the diffusion of macromolecules. CA also has nucleocapsid-like chaperone activity, promoting primer tRNA(i)-Met annealing to the multipartite primer-binding site (PBS), dimerization of Ty1 RNA and initiation of reverse transcription. Its function is as follows. The aspartyl protease (PR) mediates the proteolytic cleavages of the Gag and Gag-Pol polyproteins after assembly of the VLP. In terms of biological role, reverse transcriptase/ribonuclease H (RT) is a multifunctional enzyme that catalyzes the conversion of the retro-elements RNA genome into dsDNA within the VLP. The enzyme displays a DNA polymerase activity that can copy either DNA or RNA templates, and a ribonuclease H (RNase H) activity that cleaves the RNA strand of RNA-DNA heteroduplexes during plus-strand synthesis and hydrolyzes RNA primers. The conversion leads to a linear dsDNA copy of the retrotransposon that includes long terminal repeats (LTRs) at both ends. Functionally, integrase (IN) targets the VLP to the nucleus, where a subparticle preintegration complex (PIC) containing at least integrase and the newly synthesized dsDNA copy of the retrotransposon must transit the nuclear membrane. Once in the nucleus, integrase performs the integration of the dsDNA into the host genome. The chain is Transposon Ty1-NL1 Gag-Pol polyprotein (TY1B-NL1) from Saccharomyces cerevisiae (strain ATCC 204508 / S288c) (Baker's yeast).